We begin with the raw amino-acid sequence, 355 residues long: Alanine racemase (355 aa).

Lys34 serves as the catalytic Proton acceptor; specific for D-alanine. Position 34 is an N6-(pyridoxal phosphate)lysine (Lys34). Substrate is bound at residue Arg133. The Proton acceptor; specific for L-alanine role is filled by Tyr249. Residue Met297 coordinates substrate.

Belongs to the alanine racemase family. Requires pyridoxal 5'-phosphate as cofactor.

It carries out the reaction L-alanine = D-alanine. Its pathway is amino-acid biosynthesis; D-alanine biosynthesis; D-alanine from L-alanine: step 1/1. Functionally, catalyzes the interconversion of L-alanine and D-alanine. May also act on other amino acids. The polypeptide is Alanine racemase (alr) (Rickettsia rickettsii (strain Sheila Smith)).